The primary structure comprises 291 residues: MLANLQHLSDIQYRVTQQSATETPFKNEFWNSYQPGFYLDVVSGELLFLSEDKFDSGCGWPSFSAPAYARAVIEKEDRTHNMLRTEVRSRNANSHLGHVFKDGPPERGGLRYCINSAALRFVAREEGTALFAAGCFWSTEAYFRRVKGVLRVRVGYTGGTTKSPTYRNVCTGTTGHAEAVEILFDPQVISYEDLLKHFFRMHDPTSLNKQGGDVGTQYRSAIFYLSGTQKQQAETLMGRYAGAGKFTRPLVTTLEEARDFYPAEEYHQDYLTKNPGGYCHVSLHLASEPLE.

One can recognise a MsrB domain in the interval 1 to 124 (MLANLQHLSD…NSAALRFVAR (124 aa)). Catalysis depends on Cys113, which acts as the Nucleophile. The peptide methionine sulfoxide reductase A stretch occupies residues 127–284 (GTALFAAGCF…PGGYCHVSLH (158 aa)). The active site involves Cys135.

In the N-terminal section; belongs to the MsrB Met sulfoxide reductase family. The protein in the C-terminal section; belongs to the MsrA Met sulfoxide reductase family.

It catalyses the reaction L-methionyl-[protein] + [thioredoxin]-disulfide + H2O = L-methionyl-(R)-S-oxide-[protein] + [thioredoxin]-dithiol. The catalysed reaction is L-methionyl-[protein] + [thioredoxin]-disulfide + H2O = L-methionyl-(S)-S-oxide-[protein] + [thioredoxin]-dithiol. It carries out the reaction [thioredoxin]-disulfide + L-methionine + H2O = L-methionine (S)-S-oxide + [thioredoxin]-dithiol. Functionally, has an important function as a repair enzyme for proteins that have been inactivated by oxidation. Catalyzes the reversible oxidation-reduction of methionine sulfoxide in proteins to methionine. The polypeptide is Peptide methionine sulfoxide reductase MsrB/MsrA (msrAB) (Treponema pallidum (strain Nichols)).